The following is a 186-amino-acid chain: MSKTDWNASGLSRPSPSAHWPSRKLWQHGQKYQTTQDRSEPPAGKRRQAVRVSANHASQQLDQLKAVHLASAVRDLERAMTTLKLWESPQEISRHQALGYSVIMFMITAVKRLRESKMLTLSWFNQALMVIAPYQEETMNLKTAMWILANLIPRDMLSLTGDLLPSLWGSGLLMLKLQKEGRSTSS.

The segment covering 1 to 15 has biased composition (polar residues); it reads MSKTDWNASGLSRPS. Positions 1 to 44 are disordered; that stretch reads MSKTDWNASGLSRPSPSAHWPSRKLWQHGQKYQTTQDRSEPPAG.

Belongs to the morbillivirus protein C family. In terms of assembly, interacts with the phosphoprotein (via C-terminus); this interaction allows C to associate with the ribonucleocapsid.

Its subcellular location is the host nucleus. It localises to the host cytoplasmic vesicle. Its function is as follows. Ribonucleocapsid-associated protein that interacts with the phosphoprotein (P), thereby increasing replication accuracy and processivity of the polymerase complex. The sequence is that of Protein C (P/V/C) from Homo sapiens (Human).